Reading from the N-terminus, the 494-residue chain is UDP-glucose 6-dehydrogenase (494 aa).

NAD(+)-binding positions include 11–16, Asp-36, Arg-41, and 89–93; these read GAGYVG and VNTPT. The interval 88-110 is disordered; that stretch reads SVNTPTKTYGMGKGRAADLKYIE. An N6-acetyllysine modification is found at Lys-107. The segment at 129–135 is allosteric switch region; that stretch reads KSTVPVR. NAD(+) is bound at residue 130-132; sequence STV. The active-site Proton donor/acceptor is Glu-161. Substrate-binding positions include 161–165, 220–224, Arg-260, and 267–273; these read EFLAE, KLTAN, and KASVGFG. Glu-165 lines the NAD(+) pocket. Lys-220 (proton donor/acceptor) is an active-site residue. Residue Cys-276 is the Nucleophile of the active site. NAD(+) is bound at residue 276 to 279; it reads CFQK. Positions 321–325 are important for formation of active hexamer structure; sequence SLFNT. Residue 338 to 339 participates in substrate binding; sequence FK. Arg-346 contributes to the NAD(+) binding site. Arg-442 contacts substrate. The segment at 466–494 is disordered; sequence VSSKRIPYAPSGEIPKFSLQDMPNKKPRV. Ser-476 is subject to Phosphoserine.

The protein belongs to the UDP-glucose/GDP-mannose dehydrogenase family. As to quaternary structure, homohexamer.

The enzyme catalyses UDP-alpha-D-glucose + 2 NAD(+) + H2O = UDP-alpha-D-glucuronate + 2 NADH + 3 H(+). It participates in nucleotide-sugar biosynthesis; UDP-alpha-D-glucuronate biosynthesis; UDP-alpha-D-glucuronate from UDP-alpha-D-glucose: step 1/1. UDP-alpha-D-xylose (UDX) acts as a feedback inhibitor. It binds at the same site as the substrate, but functions as allosteric inhibitor by triggering a conformation change that disrupts the active hexameric ring structure and gives rise to an inactive, horseshoe-shaped hexamer. Its function is as follows. Catalyzes the formation of UDP-alpha-D-glucuronate, a constituent of complex glycosaminoglycans. Required for the biosynthesis of chondroitin sulfate and heparan sulfate. Required for embryonic development via its role in the biosynthesis of glycosaminoglycans. Required for proper brain and neuronal development. The protein is UDP-glucose 6-dehydrogenase (UGDH) of Bos taurus (Bovine).